An 852-amino-acid polypeptide reads, in one-letter code: Vacuolar protein sorting-associated protein 16 homolog (852 aa).

The protein belongs to the VPS16 family. Probable core component of at least two putative endosomal tethering complexes, the homotypic fusion and vacuole protein sorting (HOPS) complex and the class C core vacuole/endosome tethering (CORVET) complex. Their common core is composed of the class C Vps proteins vps-11, vps-16 and vps-18, which in HOPS further associates with vps-33.1, vps-39 and vps-41 and in CORVET with vps-8 and vps-33.2.

Its subcellular location is the late endosome membrane. The protein localises to the lysosome membrane. Plays a role in vesicle-mediated protein trafficking to lysosomal compartments including the endocytic membrane transport pathways. Believed to act as a core component of the putative HOPS and CORVET endosomal tethering complexes which are proposed to be involved in the rab-5-to-rab-7 endosome conversion probably implicating sand-1, and via binding SNAREs and SNARE complexes to mediate tethering and docking events during SNARE-mediated membrane fusion. The HOPS complex is proposed to be recruited to rab-7 on the late endosomal membrane and to regulate late endocytic, phagocytic and autophagic traffic towards lysosomes. Within the HOPS complex, contributes to the normal development of gut granules in the adult intestine. The CORVET complex is proposed to function as a rab-5 effector to mediate early endosome fusion probably in specific endosome subpopulations. Required for recruitment of vps-33.1 to the HOPS complex. Required for fusion of endosomes and autophagosomes with lysosomes; the function is dependent on its association with vps-33.1 but not vps-33.2. The sequence is that of Vacuolar protein sorting-associated protein 16 homolog from Caenorhabditis elegans.